The chain runs to 86 residues: Colicin-E2 immunity protein (86 aa).

Belongs to the colicins ColE2/ColE8/ColE9 and pyocins S1/S2 family.

Functionally, this protein is able to protect a cell, which harbors the plasmid ColE2 encoding colicin E2, against colicin E2. This Escherichia coli protein is Colicin-E2 immunity protein (imm).